The primary structure comprises 1056 residues: ISWI chromatin-remodeling complex ATPase CHR11 (1056 aa).

Residues 1–10 are compositionally biased toward low complexity; that stretch reads MARNSNSDEA. Disordered stretches follow at residues 1–80 and 133–175; these read MARN…SKRE and KSDG…GSGN. 2 stretches are compositionally biased toward acidic residues: residues 11–32 and 60–73; these read FSSE…EELE and PVED…DEEK. A coiled-coil region spans residues 12–105; sequence SSEEEEERVK…QEMLESQNAS (94 aa). Positions 141 to 151 are enriched in basic residues; sequence KKAKGRGRHAS. Acidic residues predominate over residues 155-169; it reads EEEEDEEYLKEEEDG. The Helicase ATP-binding domain occupies 201 to 366; sequence IRLYENGING…WALLNFLLPE (166 aa). 214-221 provides a ligand contact to ATP; that stretch reads DEMGLGKT. Positions 317–320 match the DEAH box motif; it reads DEAH. The Helicase C-terminal domain occupies 494–645; the sequence is LLDKLLPKLK…ALVIQQGRLA (152 aa). Disordered regions lie at residues 738-774 and 814-833; these read WNDP…PRIP and IDVE…EVEE. The segment covering 815–833 has biased composition (acidic residues); sequence DVEEPEEGGDPLTTEEVEE. SANT domains follow at residues 840–892 and 941–1002; these read EGFS…ERYK and QNKG…DTLI. Residues 1011-1056 are disordered; that stretch reads EFDERERQARKEKKLAKSATPSKRPLGRQASESPSSTKKRKHLSMR. Over residues 1047–1056 the composition is skewed to basic residues; sequence TKKRKHLSMR.

The protein belongs to the SNF2/RAD54 helicase family. ISWI subfamily. As to quaternary structure, interacts with RLT1 and RLT2. Interacts (via C-terminus) with RLT1 (via the DDT domain), RLT2 (via the DDT domain), PTM (via the DDT domain) and DDR4 (via the DDT domain). Binds to FGT1. Highly expressed in growing tissues such as inflorescence and flower meristems, young leaves and floral organs. Expressed in roots, rosette and cauline leaves, stems, flowers, inflorescences and siliques.

The protein resides in the nucleus. In terms of biological role, possesses intrinsic ATP-dependent nucleosome-remodeling activity. Constitutes the catalytic subunit of several complexes capable of forming ordered nucleosome arrays on chromatin. Involved in the formation of nucleosome distribution patterns. Involved in nuclear proliferation during megagametogenesis and cell expansion in the sporophyte. Required for the maintenance of the plant vegetative phase. In association with RLT1 or RLT2 may prevent the early activation of the vegetative-to-reproductive transition by regulating key genes that contribute to flower timing, such as FT, SEP1, SEP3, AGL8/FUL, SOC1 and FLC. Necessary to acquire heat stress (HS) memory. This is ISWI chromatin-remodeling complex ATPase CHR11 from Arabidopsis thaliana (Mouse-ear cress).